A 375-amino-acid polypeptide reads, in one-letter code: Mitogen-activated protein kinase 4a (375 aa).

The Protein kinase domain maps to 39–325 (KPPLRPIGRG…VEAALAHPYL (287 aa)). ATP is bound by residues 45-53 (IGRGAYGIV) and Lys-68. The Proton acceptor role is filled by Asp-165. Thr-197 carries the post-translational modification Phosphothreonine. Positions 197–199 (TEY) match the TXY motif. A Phosphotyrosine modification is found at Tyr-199.

This sequence belongs to the protein kinase superfamily. CMGC Ser/Thr protein kinase family. MAP kinase subfamily. Requires Mg(2+) as cofactor. In terms of processing, dually phosphorylated on Thr-197 and Tyr-199, which activates the enzyme. Phosphorylated in response to pathogen-associated molecular pattern (PAMP) chitin and in response to necrotrophic fungus B.cinerea spores. Not phosphorylated in response to osmotic stress. Expressed strongly in the apical cells of caulonemal air filaments and rhizoids in fully developed plants and less strongly, but readily detectable in filamentous protonemal tissue at the edge of the plant consisting of both chloronema and caulonema. When filamentous growth of protonema is promoted, the expression is strongest in newly formed apical tip cells of protonemal tissue.

The protein localises to the cytoplasm. It localises to the nucleus. It carries out the reaction L-seryl-[protein] + ATP = O-phospho-L-seryl-[protein] + ADP + H(+). The catalysed reaction is L-threonyl-[protein] + ATP = O-phospho-L-threonyl-[protein] + ADP + H(+). Its activity is regulated as follows. Activated by threonine and tyrosine phosphorylation. Activated in response to bacterial and fungal pathogen-associated molecular patterns (PAMPs) including chitin, chitosan and peptidyl glycans (PGNs). Activation in response to chitin requires the CERK1, MEKK1a/b, MKK1a/b/c and MPK4a/b signaling pathway. Activated in response to necrotrophic fungus B.cinerea spores. Not activated in response to osmotic stress. Its function is as follows. The CERK1, MEKK1a/b, MKK1a/b/c and MPK4a/b proteins are involved in pathogen defense. The pathway induces rapid growth inhibition, cell wall depositions and accumulation of defense-related transcripts. This protein is required for innate immunity triggered by pathogen-associated molecular patterns (PAMPs). Involved in resistance to necrotrophic fungi B.cinerea and A.brassicicola. Involved in the transduction of signals from chitosan perception to the activation of defense genes. The sequence is that of Mitogen-activated protein kinase 4a (MPK4a) from Physcomitrium patens (Spreading-leaved earth moss).